The primary structure comprises 205 residues: Small ribosomal subunit protein uS4 (205 aa).

Positions 1–46 (MSKRHSAKYKIDRRMGENLWGRPKSPVNQRSYGPGQHGQRRKQKVS) are disordered. The region spanning 94 to 154 (SRLDAIVYRA…EKSRNMALVL (61 aa)) is the S4 RNA-binding domain.

Belongs to the universal ribosomal protein uS4 family. Part of the 30S ribosomal subunit. Contacts protein S5. The interaction surface between S4 and S5 is involved in control of translational fidelity.

One of the primary rRNA binding proteins, it binds directly to 16S rRNA where it nucleates assembly of the body of the 30S subunit. Functionally, with S5 and S12 plays an important role in translational accuracy. The sequence is that of Small ribosomal subunit protein uS4 from Caulobacter sp. (strain K31).